The primary structure comprises 737 residues: Catalase-peroxidase (737 aa).

A cross-link (tryptophyl-tyrosyl-methioninium (Trp-Tyr) (with M-245)) is located at residues 89 to 219; the sequence is WHSAGTYRVF…LAASHMGLIY (131 aa). Histidine 90 serves as the catalytic Proton acceptor. Positions 219–245 form a cross-link, tryptophyl-tyrosyl-methioninium (Tyr-Met) (with W-89); sequence YVNPEGPNGNPDPKAAARDIRVTFGRM. Histidine 260 is a binding site for heme b.

Belongs to the peroxidase family. Peroxidase/catalase subfamily. Homodimer or homotetramer. Heme b serves as cofactor. Post-translationally, formation of the three residue Trp-Tyr-Met cross-link is important for the catalase, but not the peroxidase activity of the enzyme.

It localises to the cytoplasm. The catalysed reaction is H2O2 + AH2 = A + 2 H2O. It carries out the reaction 2 H2O2 = O2 + 2 H2O. Bifunctional enzyme with both catalase and broad-spectrum peroxidase activity. In Aspergillus terreus (strain NIH 2624 / FGSC A1156), this protein is Catalase-peroxidase.